A 493-amino-acid polypeptide reads, in one-letter code: Cobyric acid synthase (493 aa).

The region spanning 261 to 455 is the GATase cobBQ-type domain; it reads HTRIAVVAYP…LHGLFEDAAV (195 aa). The active-site Nucleophile is the C342. Residue H447 is part of the active site.

The protein belongs to the CobB/CobQ family. CobQ subfamily.

The protein operates within cofactor biosynthesis; adenosylcobalamin biosynthesis. Functionally, catalyzes amidations at positions B, D, E, and G on adenosylcobyrinic A,C-diamide. NH(2) groups are provided by glutamine, and one molecule of ATP is hydrogenolyzed for each amidation. This Acidovorax sp. (strain JS42) protein is Cobyric acid synthase.